Consider the following 729-residue polypeptide: Anti-bacteriophage protein B (729 aa).

Residues phenylalanine 109–serine 271 enclose the Helicase ATP-binding domain. Residue alanine 122 to serine 129 coordinates ATP. Residues alanine 297–alanine 472 enclose the Helicase C-terminal domain.

Belongs to the helicase family. Interacts with AbpB.

Functionally, part of an antiviral system composed of AbpA and AbpB; when both are expressed from a plasmid they confer resistance to phages T2, T4, T7 and lambda but not RB32 or RB69. Resistance is temperature dependent, it can be seen at 30 degrees Celsius but not at 37 or 42 degrees Celsius. The system impairs phage but not bacterial DNA synthesis (shown for T4, T7 and lambda). Partially suppressed by mutations in T4 gene 41, a replicative helicase. Deletion or mutations in this gene were selected in directed evolution experiments for resistance to intense ionizing radiation (3000 Gy). This Escherichia coli (strain K12) protein is Anti-bacteriophage protein B.